A 1876-amino-acid polypeptide reads, in one-letter code: Phenolphthiocerol/phthiocerol polyketide synthase subunit A (1876 aa).

Residues 9–83 (ADLRHWLIDY…ALAAYLAAPE (75 aa)) form the Carrier 1 domain. Serine 43 carries the O-(pantetheine 4'-phosphoryl)serine modification. One can recognise a Ketosynthase family 3 (KS3) domain in the interval 101–526 (DEPIAVVGMG…GTNAHVVIEQ (426 aa)). Active-site for beta-ketoacyl synthase activity residues include cysteine 273, histidine 408, and histidine 448. The tract at residues 626–950 (SPGPGTVFVY…NLNKAHTIHP (325 aa)) is acyltransferase. The For malonyltransferase activity role is filled by serine 720. Positions 997 to 1112 (HTTVATVSAS…AQLSSSPSDS (116 aa)) are N-terminal hotdog fold. The region spanning 997–1267 (HTTVATVSAS…YRALDFGLDV (271 aa)) is the PKS/mFAS DH domain. Histidine 1027 serves as the catalytic Proton acceptor; for dehydratase activity. Residues 1102 to 1130 (TAQLSSSPSDSASSLNEHHRANGQPPERA) form a disordered region. Residues 1106–1115 (SSSPSDSASS) are compositionally biased toward low complexity. Residues 1130 to 1267 (AHRDLIPDLA…YRALDFGLDV (138 aa)) are C-terminal hotdog fold. Aspartate 1186 functions as the Proton donor; for dehydratase activity in the catalytic mechanism. 1491–1551 (AAYLITGGLG…RRRIDAIRAL (61 aa)) is an NADP(+) binding site. Residues 1491 to 1728 (AAYLITGGLG…DGYDVAQAVV (238 aa)) form a beta-ketoacyl reductase region. The Carrier 2 domain maps to 1759-1836 (EVRSELEQGL…SLASYLAKRV (78 aa)). Serine 1796 is modified (O-(pantetheine 4'-phosphoryl)serine).

NADP(+) serves as cofactor. Requires pantetheine 4'-phosphate as cofactor.

It catalyses the reaction icosanoyl-[(phenol)carboxyphthiodiolenone synthase] + 2 (S)-methylmalonyl-CoA + 3 malonyl-CoA + 5 NADPH + 10 H(+) = C32-carboxyphthiodiolenone-[(phenol)carboxyphthiodiolenone synthase] + 5 CO2 + 5 NADP(+) + 5 CoA + 2 H2O. It carries out the reaction docosanoyl-[(phenol)carboxyphthiodiolenone synthase] + 2 (S)-methylmalonyl-CoA + 3 malonyl-CoA + 5 NADPH + 10 H(+) = C34-carboxyphthiodiolenone-[(phenol)carboxyphthiodiolenone synthase] + 5 CO2 + 5 NADP(+) + 5 CoA + 2 H2O. The enzyme catalyses 17-(4-hydroxyphenyl)heptadecanoyl-[(phenol)carboxyphthiodiolenone synthase] + 2 (S)-methylmalonyl-CoA + 3 malonyl-CoA + 5 NADPH + 10 H(+) = C35-(phenol)carboxyphthiodiolenone-[(phenol)carboxyphthiodiolenone synthase] + 5 CO2 + 5 NADP(+) + 5 CoA + 2 H2O. The catalysed reaction is 19-(4-hydroxyphenyl)nonadecanoyl-[(phenol)carboxyphthiodiolenone synthase] + 2 (S)-methylmalonyl-CoA + 3 malonyl-CoA + 5 NADPH + 10 H(+) = C37-(phenol)carboxyphthiodiolenone-[(phenol)carboxyphthiodiolenone synthase] + 5 CO2 + 5 NADP(+) + 5 CoA + 2 H2O. Its pathway is lipid metabolism; fatty acid biosynthesis. In terms of biological role, part of the PpsABCDE complex involved in the biosynthesis of the lipid core common to phthiocerols and phenolphthiocerols by successive additions of malonyl-CoA or methylmalonyl-CoA extender units. PpsA can accept as substrate the activated forms of either icosanoyl (C20), docosanoyl (C22) or lignoceroyl (C24) groups from FadD26, or a (4-hydroxyphenyl)-C17 or (4-hydroxyphenyl)-C19 fatty acyl from FadD29. PpsA initiates the biosynthesis and extends its substrate using a malonyl-CoA extender unit. The PpsB and PpsC proteins add the second and third malonyl-CoA extender units. PpsD adds an (R)-methylmalonyl unit and PpsE adds a second (R)-methylmalonyl unit. The incorporation of the methylmalonyl units results in formation of two branched methyl groups in the elongated product. The chain is Phenolphthiocerol/phthiocerol polyketide synthase subunit A (ppsA) from Mycobacterium tuberculosis (strain CDC 1551 / Oshkosh).